Here is a 486-residue protein sequence, read N- to C-terminus: Kynurenine 3-monooxygenase (486 aa).

The next 2 membrane-spanning stretches (helical) occupy residues 401–424 (LLFW…HMRY) and 437–459 (ILTR…LCYR).

The protein belongs to the aromatic-ring hydroxylase family. KMO subfamily. Requires FAD as cofactor.

The protein resides in the mitochondrion. The protein localises to the membrane. The catalysed reaction is L-kynurenine + NADPH + O2 + H(+) = 3-hydroxy-L-kynurenine + NADP(+) + H2O. Its pathway is cofactor biosynthesis; NAD(+) biosynthesis; quinolinate from L-kynurenine: step 1/3. Catalyzes the hydroxylation of L-kynurenine (L-Kyn) to form 3-hydroxy-L-kynurenine (L-3OHKyn). Required for synthesis of quinolinic acid. This Anopheles gambiae (African malaria mosquito) protein is Kynurenine 3-monooxygenase (kh).